The chain runs to 397 residues: uncharacterized protein (397 aa).

It belongs to the ROK (NagC/XylR) family.

This is an uncharacterized protein from Escherichia coli (strain K12).